The primary structure comprises 409 residues: Peptidase T (409 aa).

Histidine 78 provides a ligand contact to Zn(2+). The active site involves aspartate 80. A Zn(2+)-binding site is contributed by aspartate 140. Glutamate 173 acts as the Proton acceptor in catalysis. Residues glutamate 174, aspartate 196, and histidine 379 each coordinate Zn(2+).

The protein belongs to the peptidase M20B family. Zn(2+) is required as a cofactor.

The protein localises to the cytoplasm. It catalyses the reaction Release of the N-terminal residue from a tripeptide.. In terms of biological role, cleaves the N-terminal amino acid of tripeptides. The protein is Peptidase T of Escherichia coli O139:H28 (strain E24377A / ETEC).